Consider the following 266-residue polypeptide: Ribosomal RNA small subunit methyltransferase A (266 aa).

The S-adenosyl-L-methionine site is built by asparagine 12, leucine 14, glycine 39, glutamate 61, aspartate 87, and asparagine 107.

It belongs to the class I-like SAM-binding methyltransferase superfamily. rRNA adenine N(6)-methyltransferase family. RsmA subfamily.

The protein resides in the cytoplasm. The enzyme catalyses adenosine(1518)/adenosine(1519) in 16S rRNA + 4 S-adenosyl-L-methionine = N(6)-dimethyladenosine(1518)/N(6)-dimethyladenosine(1519) in 16S rRNA + 4 S-adenosyl-L-homocysteine + 4 H(+). Functionally, specifically dimethylates two adjacent adenosines (A1518 and A1519) in the loop of a conserved hairpin near the 3'-end of 16S rRNA in the 30S particle. May play a critical role in biogenesis of 30S subunits. The polypeptide is Ribosomal RNA small subunit methyltransferase A (Nitratidesulfovibrio vulgaris (strain ATCC 29579 / DSM 644 / CCUG 34227 / NCIMB 8303 / VKM B-1760 / Hildenborough) (Desulfovibrio vulgaris)).